We begin with the raw amino-acid sequence, 405 residues long: Beta-citrylglutamate synthase B (405 aa).

The ATP-grasp domain maps to 115-300; it reads FQELAGHGVP…VAGIVADFVL (186 aa). Residues lysine 154, 189 to 199, and arginine 215 contribute to the ATP site; that span reads QEYVKESHGRD. Residues aspartate 260, glutamate 273, and asparagine 275 each coordinate Mg(2+). Aspartate 260, glutamate 273, and asparagine 275 together coordinate Mn(2+). Positions 359–387 are disordered; sequence AMSTMSTSSTSSESEADLTETGPTPVGAN. Residues 360–371 are compositionally biased toward low complexity; that stretch reads MSTMSTSSTSSE.

The protein belongs to the RimK family. Mg(2+) serves as cofactor. The cofactor is Mn(2+).

It is found in the cytoplasm. It carries out the reaction citrate + L-glutamate + ATP = beta-citrylglutamate + ADP + phosphate + H(+). The enzyme catalyses N-acetyl-L-aspartate + L-glutamate + ATP = N-acetyl-L-aspartyl-L-glutamate + ADP + phosphate + H(+). Catalyzes the synthesis of beta-citryl-L-glutamate and N-acetyl-L-aspartyl-L-glutamate. Beta-citryl-L-glutamate is synthesized more efficiently than N-acetyl-L-aspartyl-L-glutamate. The polypeptide is Beta-citrylglutamate synthase B (rimklb) (Danio rerio (Zebrafish)).